A 295-amino-acid polypeptide reads, in one-letter code: 4-hydroxybenzoate octaprenyltransferase (295 aa).

The next 8 membrane-spanning stretches (helical) occupy residues 28-48 (AGWLLLLWPTLSALWIAAGGF), 51-71 (WHLLAVFTLGTILMRSAGCCV), 101-121 (ALGVGAVLALVSFGLVLTTNA), 124-144 (IAWSLPALAVTIAYPFAKRFV), 159-179 (IPMAFTAVGGAVPMLAAWLVL), 220-240 (VMAFYLAFVALWAWALAPFGL), 242-262 (WPLHAVLAAMLLQVAWHWRLI), and 274-294 (FTGNHWLGFTLFAGIVAGFAL).

It belongs to the UbiA prenyltransferase family. Mg(2+) is required as a cofactor.

The protein localises to the cell inner membrane. The enzyme catalyses all-trans-octaprenyl diphosphate + 4-hydroxybenzoate = 4-hydroxy-3-(all-trans-octaprenyl)benzoate + diphosphate. It functions in the pathway cofactor biosynthesis; ubiquinone biosynthesis. Catalyzes the prenylation of para-hydroxybenzoate (PHB) with an all-trans polyprenyl group. Mediates the second step in the final reaction sequence of ubiquinone-8 (UQ-8) biosynthesis, which is the condensation of the polyisoprenoid side chain with PHB, generating the first membrane-bound Q intermediate 3-octaprenyl-4-hydroxybenzoate. The sequence is that of 4-hydroxybenzoate octaprenyltransferase from Paracidovorax citrulli (strain AAC00-1) (Acidovorax citrulli).